Consider the following 93-residue polypeptide: Vacuolar ATPase assembly integral membrane protein VMA21 (93 aa).

Residues 1-21 (MSNRVSTGKMAMAPQESVQPA) are Cytoplasmic-facing. The chain crosses the membrane as a helical span at residues 22–42 (VLYKLVLFALLMAVVPIGTYF). Topologically, residues 43–54 (STLNYLWDGSTT) are lumenal. A helical transmembrane segment spans residues 55–75 (FAAISAIAAANLILVGYVVVA). The Cytoplasmic portion of the chain corresponds to 76–93 (FREDAASRTGPLPEKKTS). Residues 90-93 (KKTS) carry the Prevents secretion from ER motif.

The protein belongs to the VMA21 family.

It localises to the endoplasmic reticulum membrane. Its subcellular location is the endoplasmic reticulum-Golgi intermediate compartment membrane. It is found in the cytoplasmic vesicle. The protein resides in the COPII-coated vesicle membrane. Its function is as follows. Required for the assembly of the V0 complex of the vacuolar ATPase (V-ATPase) in the endoplasmic reticulum. The chain is Vacuolar ATPase assembly integral membrane protein VMA21 from Cryptococcus neoformans var. neoformans serotype D (strain JEC21 / ATCC MYA-565) (Filobasidiella neoformans).